The primary structure comprises 334 residues: Catabolite repressor/activator (334 aa).

In terms of domain architecture, HTH lacI-type spans 1-58 (MKLDEIARLAGVSRTTASYVINGKAKQYRVSDKTVEKVMAVVREHNYHPNAVAAGLRA). The H-T-H motif DNA-binding region spans 3-22 (LDEIARLAGVSRTTASYVIN).

As to quaternary structure, homotetramer.

Global transcriptional regulator, which plays an important role in the regulation of carbon metabolism. In Escherichia coli O157:H7, this protein is Catabolite repressor/activator (cra).